The sequence spans 251 residues: Probable aquaporin TIP4-1 (251 aa).

The next 2 helical transmembrane spans lie at 26–46 and 57–77; these read LVLTFVFVFTGVAATMAAGVP and ALAGVAIATALAAGVLVTAGF. An NPA 1 motif is present at residues 85–87; that stretch reads NPA. 3 helical membrane passes run 104-124, 144-164, and 170-190; these read ALYVAAQLLASSLACILLRYL, GLVMEIILTFSLLFVVYATIL, and VPGFGPLLTGLIVGANTIAGG. The short motif at 198-200 is the NPA 2 element; that stretch reads NPA. A helical membrane pass occupies residues 219–239; sequence WLGPLIGGPLAGLVYESLFLV.

This sequence belongs to the MIP/aquaporin (TC 1.A.8) family. TIP (TC 1.A.8.10) subfamily. As to expression, expressed in roots, leaves and anthers.

It is found in the vacuole membrane. Its function is as follows. Aquaporins facilitate the transport of water and small neutral solutes across cell membranes. May be involved in transport from the vacuolar compartment to the cytoplasm. The chain is Probable aquaporin TIP4-1 (TIP4-1) from Oryza sativa subsp. japonica (Rice).